A 90-amino-acid polypeptide reads, in one-letter code: Putative Fis-like DNA-binding protein (90 aa).

A DNA-binding region (H-T-H motif) is located at residues 66–85 (QSRAAALLGIHRATLRKKLK).

This sequence belongs to the transcriptional regulatory Fis family.

The sequence is that of Putative Fis-like DNA-binding protein from Xylella fastidiosa (strain Temecula1 / ATCC 700964).